Consider the following 415-residue polypeptide: Serine/threonine transporter SstT (415 aa).

8 consecutive transmembrane segments (helical) span residues 21–41 (ILLGLAAGIILASLSTQAALA), 45–65 (LGTLFVGALKAVAPILVLVLV), 85–105 (FLYLIGTFSAALIAVVLSVLF), 142–162 (ALLNANYIGILVWAVGLGIAF), 193–213 (LGIFGLVASTLAETGFGALWG), 217–237 (LLMVLIGGMLLVALVVNPLIV), 289–309 (VAIPLGATINMAGAAITITVL), and 331–351 (VVASLCACGASGVAGGSLLLI).

It belongs to the dicarboxylate/amino acid:cation symporter (DAACS) (TC 2.A.23) family.

The protein localises to the cell inner membrane. It catalyses the reaction L-serine(in) + Na(+)(in) = L-serine(out) + Na(+)(out). The catalysed reaction is L-threonine(in) + Na(+)(in) = L-threonine(out) + Na(+)(out). Involved in the import of serine and threonine into the cell, with the concomitant import of sodium (symport system). In Pectobacterium atrosepticum (strain SCRI 1043 / ATCC BAA-672) (Erwinia carotovora subsp. atroseptica), this protein is Serine/threonine transporter SstT.